The sequence spans 208 residues: dTTP/UTP pyrophosphatase (208 aa).

Aspartate 79 functions as the Proton acceptor in the catalytic mechanism.

Belongs to the Maf family. YhdE subfamily. It depends on a divalent metal cation as a cofactor.

It is found in the cytoplasm. It catalyses the reaction dTTP + H2O = dTMP + diphosphate + H(+). It carries out the reaction UTP + H2O = UMP + diphosphate + H(+). In terms of biological role, nucleoside triphosphate pyrophosphatase that hydrolyzes dTTP and UTP. May have a dual role in cell division arrest and in preventing the incorporation of modified nucleotides into cellular nucleic acids. The polypeptide is dTTP/UTP pyrophosphatase (Mesorhizobium japonicum (strain LMG 29417 / CECT 9101 / MAFF 303099) (Mesorhizobium loti (strain MAFF 303099))).